The sequence spans 161 residues: Large ribosomal subunit protein bL9 (161 aa).

The protein belongs to the bacterial ribosomal protein bL9 family.

In terms of biological role, binds to the 23S rRNA. The protein is Large ribosomal subunit protein bL9 of Blochmanniella floridana.